The sequence spans 234 residues: Large ribosomal subunit protein uL1 (234 aa).

The protein belongs to the universal ribosomal protein uL1 family. As to quaternary structure, part of the 50S ribosomal subunit.

Functionally, binds directly to 23S rRNA. The L1 stalk is quite mobile in the ribosome, and is involved in E site tRNA release. In terms of biological role, protein L1 is also a translational repressor protein, it controls the translation of the L11 operon by binding to its mRNA. The sequence is that of Large ribosomal subunit protein uL1 from Helicobacter pylori (strain G27).